The sequence spans 436 residues: Adenylosuccinate synthetase (436 aa).

Residues 22–28 (GDEGKGK) and 50–52 (GHE) each bind GTP. The active-site Proton acceptor is the D23. The Mg(2+) site is built by D23 and G50. IMP is bound by residues 23–26 (DEGK), 48–51 (NAGH), T141, R155, N231, T246, and R310. H51 serves as the catalytic Proton donor. 306 to 312 (VSTARVR) provides a ligand contact to substrate. GTP contacts are provided by residues R312, 338-340 (KMD), and 424-426 (GVG).

It belongs to the adenylosuccinate synthetase family. In terms of assembly, homodimer. Mg(2+) serves as cofactor.

The protein localises to the cytoplasm. It catalyses the reaction IMP + L-aspartate + GTP = N(6)-(1,2-dicarboxyethyl)-AMP + GDP + phosphate + 2 H(+). The protein operates within purine metabolism; AMP biosynthesis via de novo pathway; AMP from IMP: step 1/2. Functionally, plays an important role in the salvage pathway for purine nucleotide biosynthesis. Catalyzes the first committed step in the biosynthesis of AMP from IMP. The sequence is that of Adenylosuccinate synthetase from Babesia bovis.